The chain runs to 508 residues: Monocarboxylate transporter 9 (508 aa).

6 helical membrane-spanning segments follow: residues 13–33, 53–73, 80–100, 102–122, 137–157, and 164–184; these read WVIV…PLAV, WVGS…SLFV, PVTI…SLAP, IYFL…LLYT, GLAL…YAAL, and FYGL…ILAC. A disordered region spans residues 242 to 263; that stretch reads GDWGRETSLPKNPTGAAHTKEP. 6 consecutive transmembrane segments (helical) span residues 303–323, 341–361, 370–390, 396–416, 431–451, and 460–480; these read VFSA…PPSL, IPLI…LGIL, LYLY…IPLA, LAIL…FPYV, GILM…VGWF, and IAFY…LLAI.

This sequence belongs to the major facilitator superfamily. Monocarboxylate porter (TC 2.A.1.13) family. In terms of tissue distribution, expressed in the liver and kidneys. In the liver localizes on the sinusoidal membrane of the hepatocytes.

The protein localises to the cell membrane. The catalysed reaction is creatine(in) = creatine(out). It carries out the reaction (R)-carnitine(in) = (R)-carnitine(out). Functionally, extracellular pH-and Na(+)-sensitive low-affinity creatine transporter. Also functions as a pH-independent carnitine efflux transporter. The polypeptide is Monocarboxylate transporter 9 (Slc16a9) (Rattus norvegicus (Rat)).